Consider the following 218-residue polypeptide: Methylthioribulose-1-phosphate dehydratase (218 aa).

Zn(2+) contacts are provided by histidine 107 and histidine 109.

This sequence belongs to the aldolase class II family. MtnB subfamily. Requires Zn(2+) as cofactor.

It carries out the reaction 5-(methylsulfanyl)-D-ribulose 1-phosphate = 5-methylsulfanyl-2,3-dioxopentyl phosphate + H2O. The protein operates within amino-acid biosynthesis; L-methionine biosynthesis via salvage pathway; L-methionine from S-methyl-5-thio-alpha-D-ribose 1-phosphate: step 2/6. In terms of biological role, catalyzes the dehydration of methylthioribulose-1-phosphate (MTRu-1-P) into 2,3-diketo-5-methylthiopentyl-1-phosphate (DK-MTP-1-P). This chain is Methylthioribulose-1-phosphate dehydratase, found in Xylella fastidiosa (strain M12).